Reading from the N-terminus, the 30-residue chain is Arsenate respiratory reductase iron-sulfur subunit ArrB (30 aa).

[4Fe-4S] cluster-binding residues include C12, C15, C18, and C22.

In terms of assembly, heterodimer composed of one large subunit (ArrA) and one small subunit (ArrB). Requires [4Fe-4S] cluster as cofactor.

Its subcellular location is the periplasm. Its function is as follows. Component of the arsenate respiratory reductase (Arr) complex, which catalyzes the reduction of arsenate (As(V)) to arsenite (As(III)). ArrB is probably the electron transfer subunit. In Chrysiogenes arsenatis, this protein is Arsenate respiratory reductase iron-sulfur subunit ArrB.